A 545-amino-acid polypeptide reads, in one-letter code: uncharacterized protein (545 aa).

Disordered regions lie at residues methionine 1–glutamate 162 and tyrosine 200–proline 250. A compositionally biased stretch (polar residues) spans asparagine 86–serine 100. Low complexity-rich tracts occupy residues threonine 109–lysine 128 and serine 141–threonine 152. 2 stretches are compositionally biased toward polar residues: residues serine 212–threonine 221 and isoleucine 228–serine 244. In terms of domain architecture, PDZ spans arginine 458–glycine 540.

This is an uncharacterized protein from Caenorhabditis elegans.